A 453-amino-acid chain; its full sequence is Tryptophan dimethylallyltransferase cnsF (453 aa).

Residues 84-85 (IL) and Glu-93 contribute to the L-tryptophan site. Positions 104, 190, and 192 each coordinate substrate. Residues Tyr-194 and Arg-248 each coordinate L-tryptophan. The substrate site is built by Arg-261, Lys-263, Tyr-265, Gln-347, and Tyr-349.

This sequence belongs to the tryptophan dimethylallyltransferase family. In terms of assembly, homodimer.

The enzyme catalyses L-tryptophan + dimethylallyl diphosphate = 4-(3-methylbut-2-enyl)-L-tryptophan + diphosphate. It functions in the pathway alkaloid biosynthesis. Functionally, tryptophan dimethylallyltransferase; part of the gene cluster that mediates the biosynthesis of communesins, a prominent class of indole alkaloids with great potential as pharmaceuticals. Communesins are biosynthesized by the coupling of tryptamine and aurantioclavine, two building blocks derived from L-tryptophan. The L-tryptophan decarboxylase cnsB converts L-tryptophan to tryptamine, whereas the tryptophan dimethylallyltransferase cnsF converts L-tryptophan to 4-dimethylallyl tryptophan which is further transformed to aurantioclavine by the aurantioclavine synthase cnsA, probably aided by the catalase cnsD. The cytochrome P450 monooxygenase cnsC catalyzes the heterodimeric coupling between the two different indole moieties, tryptamine and aurantioclavine, to construct vicinal quaternary stereocenters and yield the heptacyclic communesin scaffold. The O-methyltransferase cnsE then methylates the communesin scaffold to produce communesin K, the simplest characterized communesin that contains the heptacyclic core. The dioxygenase cnsJ converts communesin K into communesin I. Acylation to introduce the hexadienyl group at position N16 of communesin I by the acyltransferase cnsK leads to the production of communesin B. The hexadienyl group is produced by the highly reducing polyketide synthase cnsI, before being hydrolytically removed from cnsI by the serine hydrolase cnsH, converted into hexadienyl-CoA by the CoA ligase cnsG, and then transferred to communesin I by cnsK. Surprisingly, cnsK may also be a promiscuous acyltransferase that can tolerate a range of acyl groups, including acetyl-, propionyl-, and butyryl-CoA, which lead to communesins A, G and H respectively. The roles of the alpha-ketoglutarate-dependent dioxygenases cnsM and cnsP have still to be determined. The chain is Tryptophan dimethylallyltransferase cnsF from Penicillium expansum (Blue mold rot fungus).